We begin with the raw amino-acid sequence, 160 residues long: uncharacterized protein (160 aa).

This is an uncharacterized protein from Bacillus subtilis (strain 168).